Here is a 120-residue protein sequence, read N- to C-terminus: Phosphoribosyl-ATP pyrophosphatase (120 aa).

The disordered stretch occupies residues 97–120; the sequence is REGTSGLVEKASRPAKKDSGTADS. A compositionally biased stretch (basic and acidic residues) spans 106 to 120; the sequence is KASRPAKKDSGTADS.

Belongs to the PRA-PH family.

Its subcellular location is the cytoplasm. The enzyme catalyses 1-(5-phospho-beta-D-ribosyl)-ATP + H2O = 1-(5-phospho-beta-D-ribosyl)-5'-AMP + diphosphate + H(+). Its pathway is amino-acid biosynthesis; L-histidine biosynthesis; L-histidine from 5-phospho-alpha-D-ribose 1-diphosphate: step 2/9. This is Phosphoribosyl-ATP pyrophosphatase from Rhodopirellula baltica (strain DSM 10527 / NCIMB 13988 / SH1).